Reading from the N-terminus, the 1105-residue chain is DNA polymerase delta catalytic subunit (1105 aa).

A disordered region spans residues 1–46; the sequence is MSSGGRGGKRRGAPPPGPSGAAAKRAHPGGTPQPPPPAATAAAPVA. Residues C1015, C1018, C1030, and C1033 each coordinate Zn(2+). The CysA-type zinc finger occupies 1015–1033; it reads CLGCKAVISGSNQTLCFHC. [4Fe-4S] cluster-binding residues include C1062, C1065, C1075, and C1080. The CysB motif motif lies at 1062–1080; sequence CQECQGSLHQDVLCTSRDC.

This sequence belongs to the DNA polymerase type-B family. Heterodimer with subunits of 125 kDa and 50 kDa. The 125 kDa subunit contains the polymerase active site and most likely the active site for the 3'-5' exonuclease activity. Requires [4Fe-4S] cluster as cofactor.

Its subcellular location is the nucleus. It carries out the reaction DNA(n) + a 2'-deoxyribonucleoside 5'-triphosphate = DNA(n+1) + diphosphate. Its function is as follows. This polymerase possesses two enzymatic activities: DNA synthesis (polymerase) and an exonucleolytic activity that degrades single-stranded DNA in the 3'- to 5'-direction. This chain is DNA polymerase delta catalytic subunit (POLD1), found in Oryza sativa subsp. japonica (Rice).